Here is a 106-residue protein sequence, read N- to C-terminus: Nucleoid-associated protein Abu_0429 (106 aa).

The protein belongs to the YbaB/EbfC family. In terms of assembly, homodimer.

It is found in the cytoplasm. It localises to the nucleoid. Its function is as follows. Binds to DNA and alters its conformation. May be involved in regulation of gene expression, nucleoid organization and DNA protection. The protein is Nucleoid-associated protein Abu_0429 of Aliarcobacter butzleri (strain RM4018) (Arcobacter butzleri).